The chain runs to 308 residues: Energy-coupling factor transporter ATP-binding protein EcfA2 (308 aa).

Positions 3 to 263 (IEVKNISKVF…VDFLRENEME (261 aa)) constitute an ABC transporter domain. ATP is bound at residue 40 to 47 (GPTGSGKT).

The protein belongs to the ABC transporter superfamily. Energy-coupling factor EcfA family. As to quaternary structure, forms a stable energy-coupling factor (ECF) transporter complex composed of 2 membrane-embedded substrate-binding proteins (S component), 2 ATP-binding proteins (A component) and 2 transmembrane proteins (T component).

It is found in the cell membrane. In terms of biological role, ATP-binding (A) component of a common energy-coupling factor (ECF) ABC-transporter complex. Unlike classic ABC transporters this ECF transporter provides the energy necessary to transport a number of different substrates. The chain is Energy-coupling factor transporter ATP-binding protein EcfA2 from Mycoplasma mobile (strain ATCC 43663 / 163K / NCTC 11711) (Mesomycoplasma mobile).